The following is a 475-amino-acid chain: Zinc finger protein 383 (475 aa).

Residues 6–77 enclose the KRAB domain; the sequence is VMFSDVSIDF…GRELTRGLCS (72 aa). 11 C2H2-type zinc fingers span residues 170 to 192, 198 to 220, 226 to 248, 254 to 276, 282 to 304, 310 to 332, 338 to 360, 366 to 388, 394 to 416, 422 to 444, and 450 to 472; these read FECK…QRIH, YECK…LKIH, YECK…QRIH, YACK…VRIH, YDCK…QRIH, FECL…QRIH, YECN…LRIH, and YNCK…QGIH.

Belongs to the krueppel C2H2-type zinc-finger protein family.

It is found in the nucleus. The protein resides in the cytoplasm. Functionally, may function as a transcriptional repressor, suppressing transcriptional activities mediated by MAPK signaling pathways. The sequence is that of Zinc finger protein 383 (ZNF383) from Macaca fascicularis (Crab-eating macaque).